Reading from the N-terminus, the 398-residue chain is Na(+)/H(+) antiporter NhaA (398 aa).

A run of 12 helical transmembrane segments spans residues 21-41, 56-76, 94-114, 124-144, 153-173, 176-196, 201-221, 263-283, 284-304, 306-326, 333-353, and 367-387; these read AGGI…NSPL, LSVS…LVGL, VLPG…YVFI, GWAI…SLLG, VFLT…IAIF, SGLS…LVVL, VMTL…VLKS, IVPF…SLAG, LSLG…LVVG, LVGV…DLPA, MIGI…IGLL, and VGIL…LLMA.

The protein belongs to the NhaA Na(+)/H(+) (TC 2.A.33) antiporter family.

The protein resides in the cell inner membrane. It catalyses the reaction Na(+)(in) + 2 H(+)(out) = Na(+)(out) + 2 H(+)(in). Na(+)/H(+) antiporter that extrudes sodium in exchange for external protons. The chain is Na(+)/H(+) antiporter NhaA from Mesorhizobium japonicum (strain LMG 29417 / CECT 9101 / MAFF 303099) (Mesorhizobium loti (strain MAFF 303099)).